A 274-amino-acid chain; its full sequence is Bis(5'-nucleosyl)-tetraphosphatase, symmetrical (274 aa).

Belongs to the Ap4A hydrolase family.

The enzyme catalyses P(1),P(4)-bis(5'-adenosyl) tetraphosphate + H2O = 2 ADP + 2 H(+). Its function is as follows. Hydrolyzes diadenosine 5',5'''-P1,P4-tetraphosphate to yield ADP. The sequence is that of Bis(5'-nucleosyl)-tetraphosphatase, symmetrical from Buchnera aphidicola subsp. Acyrthosiphon pisum (strain Tuc7).